We begin with the raw amino-acid sequence, 355 residues long: 4-hydroxy-3-methylbut-2-en-1-yl diphosphate synthase (flavodoxin) (355 aa).

Cys-266, Cys-269, Cys-301, and Glu-308 together coordinate [4Fe-4S] cluster.

The protein belongs to the IspG family. Requires [4Fe-4S] cluster as cofactor.

The catalysed reaction is (2E)-4-hydroxy-3-methylbut-2-enyl diphosphate + oxidized [flavodoxin] + H2O + 2 H(+) = 2-C-methyl-D-erythritol 2,4-cyclic diphosphate + reduced [flavodoxin]. Its pathway is isoprenoid biosynthesis; isopentenyl diphosphate biosynthesis via DXP pathway; isopentenyl diphosphate from 1-deoxy-D-xylulose 5-phosphate: step 5/6. Converts 2C-methyl-D-erythritol 2,4-cyclodiphosphate (ME-2,4cPP) into 1-hydroxy-2-methyl-2-(E)-butenyl 4-diphosphate. In Caldanaerobacter subterraneus subsp. tengcongensis (strain DSM 15242 / JCM 11007 / NBRC 100824 / MB4) (Thermoanaerobacter tengcongensis), this protein is 4-hydroxy-3-methylbut-2-en-1-yl diphosphate synthase (flavodoxin).